Reading from the N-terminus, the 240-residue chain is 5-oxoprolinase subunit B (240 aa).

194-201 (GWQLIGKT) contributes to the ATP binding site.

The protein belongs to the PxpB family. Forms a complex composed of PxpA, PxpB and PxpC. Interacts with PxpC (KipA). Interaction with PxpC prevents the inhibitory action of PxpB (KipI). Interacts with KinA. Two PxpB monomers bind via their C-domains at a conserved proline in the KinA dimerization and histidine-phosphotransfer (DHp) domain.

The enzyme catalyses 5-oxo-L-proline + ATP + 2 H2O = L-glutamate + ADP + phosphate + H(+). Catalyzes the cleavage of 5-oxoproline to form L-glutamate coupled to the hydrolysis of ATP to ADP and inorganic phosphate. In addition, is a potent inhibitor of the autophosphorylation reaction of kinase A (kinA) and its reverse reaction, but does not inhibit phosphate transfer to the Spo0F response regulator once kinase A is phosphorylated. Is an inhibitor of the catalytic domain of kinase A affecting the ATP/ADP reactions and not the phosphotransferase functions of this domain. The inhibition is non-competitive with respect to ATP. This is 5-oxoprolinase subunit B from Bacillus subtilis (strain 168).